Reading from the N-terminus, the 92-residue chain is Acylphosphatase (92 aa).

The Acylphosphatase-like domain occupies 5–92 (RVKVKVNGRV…GVFERFEVRF (88 aa)). Active-site residues include R20 and N38.

The protein belongs to the acylphosphatase family.

It carries out the reaction an acyl phosphate + H2O = a carboxylate + phosphate + H(+). This is Acylphosphatase (acyP) from Syntrophotalea carbinolica (strain DSM 2380 / NBRC 103641 / GraBd1) (Pelobacter carbinolicus).